A 142-amino-acid polypeptide reads, in one-letter code: Large ribosomal subunit protein uL13 (142 aa).

The protein belongs to the universal ribosomal protein uL13 family. As to quaternary structure, part of the 50S ribosomal subunit.

In terms of biological role, this protein is one of the early assembly proteins of the 50S ribosomal subunit, although it is not seen to bind rRNA by itself. It is important during the early stages of 50S assembly. The polypeptide is Large ribosomal subunit protein uL13 (Opitutus terrae (strain DSM 11246 / JCM 15787 / PB90-1)).